The following is a 197-amino-acid chain: Imidazoleglycerol-phosphate dehydratase (197 aa).

The protein belongs to the imidazoleglycerol-phosphate dehydratase family.

It localises to the cytoplasm. The catalysed reaction is D-erythro-1-(imidazol-4-yl)glycerol 3-phosphate = 3-(imidazol-4-yl)-2-oxopropyl phosphate + H2O. It functions in the pathway amino-acid biosynthesis; L-histidine biosynthesis; L-histidine from 5-phospho-alpha-D-ribose 1-diphosphate: step 6/9. This chain is Imidazoleglycerol-phosphate dehydratase, found in Pseudomonas aeruginosa (strain LESB58).